Consider the following 459-residue polypeptide: UDP-N-acetylmuramoylalanine--D-glutamate ligase (459 aa).

119–125 provides a ligand contact to ATP; it reads GTNGKTT.

It belongs to the MurCDEF family.

It localises to the cytoplasm. It catalyses the reaction UDP-N-acetyl-alpha-D-muramoyl-L-alanine + D-glutamate + ATP = UDP-N-acetyl-alpha-D-muramoyl-L-alanyl-D-glutamate + ADP + phosphate + H(+). Its pathway is cell wall biogenesis; peptidoglycan biosynthesis. Cell wall formation. Catalyzes the addition of glutamate to the nucleotide precursor UDP-N-acetylmuramoyl-L-alanine (UMA). The protein is UDP-N-acetylmuramoylalanine--D-glutamate ligase of Lactiplantibacillus plantarum (strain ATCC BAA-793 / NCIMB 8826 / WCFS1) (Lactobacillus plantarum).